The following is a 345-amino-acid chain: Anthranilate phosphoribosyltransferase (345 aa).

5-phospho-alpha-D-ribose 1-diphosphate-binding positions include G83, 86–87 (GD), T91, 93–96 (NIST), 111–119 (KHGNRNLSS), and S123. Residue G83 coordinates anthranilate. A Mg(2+)-binding site is contributed by S95. Anthranilate is bound at residue N114. R169 provides a ligand contact to anthranilate. Mg(2+) is bound by residues D228 and E229.

Belongs to the anthranilate phosphoribosyltransferase family. As to quaternary structure, homodimer. The cofactor is Mg(2+).

It catalyses the reaction N-(5-phospho-beta-D-ribosyl)anthranilate + diphosphate = 5-phospho-alpha-D-ribose 1-diphosphate + anthranilate. Its pathway is amino-acid biosynthesis; L-tryptophan biosynthesis; L-tryptophan from chorismate: step 2/5. Catalyzes the transfer of the phosphoribosyl group of 5-phosphorylribose-1-pyrophosphate (PRPP) to anthranilate to yield N-(5'-phosphoribosyl)-anthranilate (PRA). The chain is Anthranilate phosphoribosyltransferase from Paracoccus denitrificans (strain Pd 1222).